A 248-amino-acid chain; its full sequence is Putative homeobox-leucine zipper protein HOX26 (248 aa).

The disordered stretch occupies residues 50–118 (KKVAAAAVVA…GDEEGASRKK (69 aa)). Over residues 79 to 89 (RQRRSCKKGRR) the composition is skewed to basic residues. A DNA-binding region (homeobox) is located at residues 114–173 (ASRKKLRLTGEQATLLEDSFRAHNILSHAEKQELAGKLGLSARQVEVWFQNRRARTKLKQ). A leucine-zipper region spans residues 172-216 (KQTEADCDLLRRWCDHLAADNARLRRDLAELRRSSSSPPVSGLAV).

It belongs to the HD-ZIP homeobox family. Class II subfamily.

Its subcellular location is the nucleus. In terms of biological role, probable transcription factor. This is Putative homeobox-leucine zipper protein HOX26 (HOX26) from Oryza sativa subsp. japonica (Rice).